Here is a 216-residue protein sequence, read N- to C-terminus: MKIGILGGTFDPIHFGHIRPAQEVKQQLKLDEVWLMPNHIPPHKQGTHVSSQARLAMAELIADEFPCFKVCDIEAKRDTPSYSAMTLTQLTKIYPQHEFYFIMGMDSFLSFTRWHEWQQLFGLCHLVVCKRPGWLLDDKDPMQKILTPRLHDVARPLPAKSGKIFMVDITQQDISSTQVRQQLMQGIMPSAVLPTSIQEYIRHNRLYRGDSSTKTD.

Belongs to the NadD family.

The catalysed reaction is nicotinate beta-D-ribonucleotide + ATP + H(+) = deamido-NAD(+) + diphosphate. Its pathway is cofactor biosynthesis; NAD(+) biosynthesis; deamido-NAD(+) from nicotinate D-ribonucleotide: step 1/1. Its function is as follows. Catalyzes the reversible adenylation of nicotinate mononucleotide (NaMN) to nicotinic acid adenine dinucleotide (NaAD). This is Probable nicotinate-nucleotide adenylyltransferase from Shewanella pealeana (strain ATCC 700345 / ANG-SQ1).